The primary structure comprises 764 residues: Probable 5-methyltetrahydropteroyltriglutamate--homocysteine methyltransferase (764 aa).

5-methyltetrahydropteroyltri-L-glutamate-binding residues include Lys-19 and Asn-126. The residue at position 182 (Ser-182) is a Phosphoserine. Position 441 is a phosphothreonine (Thr-441). Residues 442 to 444 (IGS) and Glu-495 each bind L-homocysteine. Residues 442–444 (IGS) and Glu-495 contribute to the L-methionine site. 5-methyltetrahydropteroyltri-L-glutamate is bound by residues Asp-500, Tyr-523, 526–527 (RC), and Trp-572. Asp-610 contributes to the L-homocysteine binding site. Asp-610 provides a ligand contact to L-methionine. Zn(2+)-binding residues include His-652, Cys-654, and Glu-676. His-703 (proton donor) is an active-site residue. Cys-735 is a Zn(2+) binding site.

It belongs to the vitamin-B12 independent methionine synthase family. The cofactor is Zn(2+).

The protein resides in the nucleus. The protein localises to the cytoplasm. The catalysed reaction is 5-methyltetrahydropteroyltri-L-glutamate + L-homocysteine = tetrahydropteroyltri-L-glutamate + L-methionine. It functions in the pathway amino-acid biosynthesis; L-methionine biosynthesis via de novo pathway; L-methionine from L-homocysteine (MetE route): step 1/1. In terms of biological role, catalyzes the transfer of a methyl group from 5-methyltetrahydrofolate to homocysteine resulting in methionine formation. In Schizosaccharomyces pombe (strain 972 / ATCC 24843) (Fission yeast), this protein is Probable 5-methyltetrahydropteroyltriglutamate--homocysteine methyltransferase (met26).